The following is a 110-amino-acid chain: Large ribosomal subunit protein uL22 (110 aa).

Belongs to the universal ribosomal protein uL22 family. Part of the 50S ribosomal subunit.

This protein binds specifically to 23S rRNA; its binding is stimulated by other ribosomal proteins, e.g. L4, L17, and L20. It is important during the early stages of 50S assembly. It makes multiple contacts with different domains of the 23S rRNA in the assembled 50S subunit and ribosome. Functionally, the globular domain of the protein is located near the polypeptide exit tunnel on the outside of the subunit, while an extended beta-hairpin is found that lines the wall of the exit tunnel in the center of the 70S ribosome. This is Large ribosomal subunit protein uL22 from Geobacter metallireducens (strain ATCC 53774 / DSM 7210 / GS-15).